A 595-amino-acid polypeptide reads, in one-letter code: L-allo-isoleucine:holo-[CmaA peptidyl-carrier protein] ligase (595 aa).

The Carrier domain occupies 507 to 582 (VVSPQAGSAV…EWVQYYATHA (76 aa)). Residue Ser542 is modified to O-(pantetheine 4'-phosphoryl)serine.

The protein belongs to the ATP-dependent AMP-binding enzyme family. As to quaternary structure, homodimer. Pantetheine 4'-phosphate serves as cofactor.

The catalysed reaction is L-alloisoleucine + holo-[CmaA peptidyl-carrier protein] + ATP = L-alloisoleucyl-[CmaA peptidyl-carrier protein] + AMP + diphosphate. In terms of biological role, involved in the biosynthesis of the phytotoxin coronatine (COR) which mimics the plant hormone jasmonic acid isoleucine and promotes opening of stomata for bacterial entry, bacterial growth in the apoplast, systemic susceptibility, and disease symptoms. CmaA catalyzes the adenylation of L-allo-isoleucine (via the A domain) and the attachment of L-allo-isoleucine to the 4'-phosphopantetheine arm located within the T domain of CmaA. It can also use L-isoleucine, L-leucine and L-valine as substrates. This Pseudomonas savastanoi pv. glycinea (Pseudomonas syringae pv. glycinea) protein is L-allo-isoleucine:holo-[CmaA peptidyl-carrier protein] ligase.